The following is a 358-amino-acid chain: Chorismate synthase (358 aa).

Positions alanine 39–glutamate 61 are disordered. Residues arginine 48 and arginine 54 each contribute to the NADP(+) site. FMN-binding positions include arginine 125–serine 127, asparagine 237–alanine 238, glycine 284, lysine 299–serine 303, and arginine 325.

The protein belongs to the chorismate synthase family. Homotetramer. The cofactor is FMNH2.

It catalyses the reaction 5-O-(1-carboxyvinyl)-3-phosphoshikimate = chorismate + phosphate. It functions in the pathway metabolic intermediate biosynthesis; chorismate biosynthesis; chorismate from D-erythrose 4-phosphate and phosphoenolpyruvate: step 7/7. Functionally, catalyzes the anti-1,4-elimination of the C-3 phosphate and the C-6 proR hydrogen from 5-enolpyruvylshikimate-3-phosphate (EPSP) to yield chorismate, which is the branch point compound that serves as the starting substrate for the three terminal pathways of aromatic amino acid biosynthesis. This reaction introduces a second double bond into the aromatic ring system. This is Chorismate synthase from Sphingopyxis alaskensis (strain DSM 13593 / LMG 18877 / RB2256) (Sphingomonas alaskensis).